The sequence spans 355 residues: NADH dehydrogenase [ubiquinone] 1 alpha subcomplex subunit 10, mitochondrial (355 aa).

The transit peptide at 1-35 (MALRLLRLVPASASARGLAAGAQRVGRIHTSVHCK) directs the protein to the mitochondrion. Lys-122 carries the N6-acetyllysine; alternate modification. N6-succinyllysine; alternate is present on Lys-122. Ser-250 is modified (phosphoserine; by PINK1). Position 285 is an N6-succinyllysine (Lys-285).

The protein belongs to the complex I NDUFA10 subunit family. In terms of assembly, complex I is composed of 45 different subunits. This a component of the hydrophobic protein fraction. The cofactor is FAD. In terms of processing, phosphorylation at Ser-250 by PINK1 is required for the binding and/or reduction of the complex I substrate ubiquinone. In terms of tissue distribution, expressed in the head and flagellum of epididymal sperm but not in testicular sperm (at protein level).

It is found in the mitochondrion matrix. Functionally, accessory subunit of the mitochondrial membrane respiratory chain NADH dehydrogenase (Complex I), that is believed not to be involved in catalysis. Complex I functions in the transfer of electrons from NADH to the respiratory chain. The immediate electron acceptor for the enzyme is believed to be ubiquinone. The sequence is that of NADH dehydrogenase [ubiquinone] 1 alpha subcomplex subunit 10, mitochondrial (Ndufa10) from Rattus norvegicus (Rat).